Reading from the N-terminus, the 241-residue chain is Probable transcriptional regulatory protein RSc2190 (241 aa).

The protein belongs to the TACO1 family.

Its subcellular location is the cytoplasm. In Ralstonia nicotianae (strain ATCC BAA-1114 / GMI1000) (Ralstonia solanacearum), this protein is Probable transcriptional regulatory protein RSc2190.